The following is a 167-amino-acid chain: Cytochrome c-type biogenesis protein CcmE (167 aa).

The Cytoplasmic segment spans residues 1 to 7; the sequence is MTRKTRR. A helical; Signal-anchor for type II membrane protein transmembrane segment spans residues 8–28; that stretch reads LWIVIACLACVGSAAALTLRA. Residues 29 to 167 lie on the Periplasmic side of the membrane; sequence FSSNIVFFMA…DTMTAKKAGG (139 aa). Residues His-125 and Tyr-129 each contribute to the heme site. Over residues 141 to 150 the composition is skewed to basic and acidic residues; that stretch reads TGKWDPRFGK. Residues 141 to 167 are disordered; the sequence is TGKWDPRFGKAPDASSWDTMTAKKAGG.

It belongs to the CcmE/CycJ family.

It localises to the cell inner membrane. In terms of biological role, heme chaperone required for the biogenesis of c-type cytochromes. Transiently binds heme delivered by CcmC and transfers the heme to apo-cytochromes in a process facilitated by CcmF and CcmH. This Gluconobacter oxydans (strain 621H) (Gluconobacter suboxydans) protein is Cytochrome c-type biogenesis protein CcmE.